The following is a 480-amino-acid chain: UDP-glycosyltransferase 71C5 (480 aa).

UDP-alpha-D-glucose contacts are provided by residues Ser290, 349 to 351 (APQ), 366 to 374 (HCGWNSVQE), and 388 to 391 (YAEQ).

It belongs to the UDP-glycosyltransferase family.

Possesses low quercetin 3-O-glucosyltransferase activity in vitro. The polypeptide is UDP-glycosyltransferase 71C5 (UGT71C5) (Arabidopsis thaliana (Mouse-ear cress)).